A 386-amino-acid chain; its full sequence is Probable mannan endo-1,4-beta-mannosidase A (386 aa).

Positions Met1–Ala21 are cleaved as a signal peptide. Residues Trp95 and Asn207 each contribute to the substrate site. Glu208 acts as the Proton donor in catalysis. Residue Tyr283 coordinates substrate. The active-site Nucleophile is Glu316. N-linked (GlcNAc...) asparagine glycosylation is present at Asn336. Substrate is bound at residue Trp346.

The protein belongs to the glycosyl hydrolase 5 (cellulase A) family.

It is found in the secreted. It catalyses the reaction Random hydrolysis of (1-&gt;4)-beta-D-mannosidic linkages in mannans, galactomannans and glucomannans.. Functionally, endo-1,4-mannanase, a crucial enzyme for depolymerization of seed galactomannans and wood galactoglucomannans. The protein is Probable mannan endo-1,4-beta-mannosidase A (manA) of Aspergillus flavus (strain ATCC 200026 / FGSC A1120 / IAM 13836 / NRRL 3357 / JCM 12722 / SRRC 167).